The chain runs to 662 residues: DNA ligase (662 aa).

NAD(+) is bound by residues 31–35, 80–81, and E109; these read DYEYD and SL. Catalysis depends on K111, which acts as the N6-AMP-lysine intermediate. Residues R132, E166, K282, and K306 each coordinate NAD(+). Zn(2+) contacts are provided by C400, C403, C418, and C423. Residues 581–662 form the BRCT domain; the sequence is KVSNIFEGKT…FEEMLKGENI (82 aa).

It belongs to the NAD-dependent DNA ligase family. LigA subfamily. Requires Mg(2+) as cofactor. It depends on Mn(2+) as a cofactor.

It carries out the reaction NAD(+) + (deoxyribonucleotide)n-3'-hydroxyl + 5'-phospho-(deoxyribonucleotide)m = (deoxyribonucleotide)n+m + AMP + beta-nicotinamide D-nucleotide.. In terms of biological role, DNA ligase that catalyzes the formation of phosphodiester linkages between 5'-phosphoryl and 3'-hydroxyl groups in double-stranded DNA using NAD as a coenzyme and as the energy source for the reaction. It is essential for DNA replication and repair of damaged DNA. The protein is DNA ligase of Thermoanaerobacter sp. (strain X514).